Reading from the N-terminus, the 380-residue chain is Chaperone protein DnaJ (380 aa).

Residues 5–70 (DFYEVLGVSK…NLRARYDQYG (66 aa)) enclose the J domain. Residues 135 to 213 (GVSKEIKVPS…CHGEGRYQKT (79 aa)) form a CR-type zinc finger. Zn(2+)-binding residues include C148, C151, C165, C168, C187, C190, C201, and C204. 4 CXXCXGXG motif repeats span residues 148 to 155 (CEVCNGSG), 165 to 172 (CPTCHGAG), 187 to 194 (CPHCHGRG), and 201 to 208 (CRKCHGEG).

It belongs to the DnaJ family. Homodimer. Zn(2+) is required as a cofactor.

The protein resides in the cytoplasm. In terms of biological role, participates actively in the response to hyperosmotic and heat shock by preventing the aggregation of stress-denatured proteins and by disaggregating proteins, also in an autonomous, DnaK-independent fashion. Unfolded proteins bind initially to DnaJ; upon interaction with the DnaJ-bound protein, DnaK hydrolyzes its bound ATP, resulting in the formation of a stable complex. GrpE releases ADP from DnaK; ATP binding to DnaK triggers the release of the substrate protein, thus completing the reaction cycle. Several rounds of ATP-dependent interactions between DnaJ, DnaK and GrpE are required for fully efficient folding. Also involved, together with DnaK and GrpE, in the DNA replication of plasmids through activation of initiation proteins. The chain is Chaperone protein DnaJ from Aeromonas salmonicida (strain A449).